The sequence spans 187 residues: UPF0398 protein LBA1157 (187 aa).

Belongs to the UPF0398 family.

The protein is UPF0398 protein LBA1157 of Lactobacillus acidophilus (strain ATCC 700396 / NCK56 / N2 / NCFM).